A 453-amino-acid chain; its full sequence is Ribulose bisphosphate carboxylase large chain (453 aa).

Positions 1–2 are excised as a propeptide; the sequence is MS. Position 3 is an N-acetylproline (Pro-3). Lys-14 is modified (N6,N6,N6-trimethyllysine). Substrate contacts are provided by Asn-123 and Thr-173. The active-site Proton acceptor is the Lys-175. Lys-177 contributes to the substrate binding site. The Mg(2+) site is built by Lys-201, Asp-203, and Glu-204. The residue at position 201 (Lys-201) is an N6-carboxylysine. His-294 functions as the Proton acceptor in the catalytic mechanism. Substrate is bound by residues Arg-295, His-327, and Ser-379.

It belongs to the RuBisCO large chain family. Type I subfamily. As to quaternary structure, heterohexadecamer of 8 large chains and 8 small chains; disulfide-linked. The disulfide link is formed within the large subunit homodimers. Requires Mg(2+) as cofactor. In terms of processing, the disulfide bond which can form in the large chain dimeric partners within the hexadecamer appears to be associated with oxidative stress and protein turnover.

It localises to the plastid. The protein resides in the chloroplast. The catalysed reaction is 2 (2R)-3-phosphoglycerate + 2 H(+) = D-ribulose 1,5-bisphosphate + CO2 + H2O. The enzyme catalyses D-ribulose 1,5-bisphosphate + O2 = 2-phosphoglycolate + (2R)-3-phosphoglycerate + 2 H(+). Functionally, ruBisCO catalyzes two reactions: the carboxylation of D-ribulose 1,5-bisphosphate, the primary event in carbon dioxide fixation, as well as the oxidative fragmentation of the pentose substrate in the photorespiration process. Both reactions occur simultaneously and in competition at the same active site. This Rubia tinctorum (Madder) protein is Ribulose bisphosphate carboxylase large chain.